The primary structure comprises 165 residues: NADH-quinone oxidoreductase subunit I (165 aa).

4Fe-4S ferredoxin-type domains lie at 66–98 (HRLTKNEKGDLKCVACDMCATACPANCIFITAT) and 109–138 (SKFTIDLLECVFCGLCVEACPKDAIRMDTG). 8 residues coordinate [4Fe-4S] cluster: cysteine 78, cysteine 81, cysteine 84, cysteine 88, cysteine 118, cysteine 121, cysteine 124, and cysteine 128.

It belongs to the complex I 23 kDa subunit family. In terms of assembly, NDH-1 is composed of 14 different subunits. Subunits NuoA, H, J, K, L, M, N constitute the membrane sector of the complex. [4Fe-4S] cluster is required as a cofactor.

The protein localises to the cell inner membrane. The enzyme catalyses a quinone + NADH + 5 H(+)(in) = a quinol + NAD(+) + 4 H(+)(out). NDH-1 shuttles electrons from NADH, via FMN and iron-sulfur (Fe-S) centers, to quinones in the respiratory chain. The immediate electron acceptor for the enzyme in this species is believed to be ubiquinone. Couples the redox reaction to proton translocation (for every two electrons transferred, four hydrogen ions are translocated across the cytoplasmic membrane), and thus conserves the redox energy in a proton gradient. This Campylobacter fetus subsp. fetus (strain 82-40) protein is NADH-quinone oxidoreductase subunit I.